The chain runs to 184 residues: MILPIYVYGQPVLRKVAEDITPEYPNLKELIANMFETMVHADGVGLAAPQIGLPIRVVTITLDPLSEDYPEFKDFNKAYINPHIIEVGGEEVSMEEGCLSLPGIHESVKRGNKIRVKYMDENFVEHDEVVEGYLARVMQHEFDHLDGKMFIDHLSPLRKQMIRGKLNTMLKGKARSSYKMKQVK.

Fe cation-binding residues include Cys-98 and His-140. Residue Glu-141 is part of the active site. His-144 is a binding site for Fe cation.

It belongs to the polypeptide deformylase family. Requires Fe(2+) as cofactor.

It catalyses the reaction N-terminal N-formyl-L-methionyl-[peptide] + H2O = N-terminal L-methionyl-[peptide] + formate. Its function is as follows. Removes the formyl group from the N-terminal Met of newly synthesized proteins. Requires at least a dipeptide for an efficient rate of reaction. N-terminal L-methionine is a prerequisite for activity but the enzyme has broad specificity at other positions. This is Peptide deformylase from Bacteroides thetaiotaomicron (strain ATCC 29148 / DSM 2079 / JCM 5827 / CCUG 10774 / NCTC 10582 / VPI-5482 / E50).